The primary structure comprises 253 residues: 5'/3'-nucleotidase SurE (253 aa).

A divalent metal cation contacts are provided by Asp8, Asp9, Ser39, and Asn92.

The protein belongs to the SurE nucleotidase family. The cofactor is a divalent metal cation.

Its subcellular location is the cytoplasm. The enzyme catalyses a ribonucleoside 5'-phosphate + H2O = a ribonucleoside + phosphate. It carries out the reaction a ribonucleoside 3'-phosphate + H2O = a ribonucleoside + phosphate. The catalysed reaction is [phosphate](n) + H2O = [phosphate](n-1) + phosphate + H(+). In terms of biological role, nucleotidase with a broad substrate specificity as it can dephosphorylate various ribo- and deoxyribonucleoside 5'-monophosphates and ribonucleoside 3'-monophosphates with highest affinity to 3'-AMP. Also hydrolyzes polyphosphate (exopolyphosphatase activity) with the preference for short-chain-length substrates (P20-25). Might be involved in the regulation of dNTP and NTP pools, and in the turnover of 3'-mononucleotides produced by numerous intracellular RNases (T1, T2, and F) during the degradation of various RNAs. The protein is 5'/3'-nucleotidase SurE of Salmonella typhimurium (strain LT2 / SGSC1412 / ATCC 700720).